A 209-amino-acid chain; its full sequence is Guanylate kinase (209 aa).

One can recognise a Guanylate kinase-like domain in the interval 16 to 198 (GRLVIISGPS…AVTEICQILL (183 aa)). 23–30 (GPSGAGKS) contributes to the ATP binding site.

The protein belongs to the guanylate kinase family.

The protein resides in the cytoplasm. The enzyme catalyses GMP + ATP = GDP + ADP. Functionally, essential for recycling GMP and indirectly, cGMP. This is Guanylate kinase from Rhodopirellula baltica (strain DSM 10527 / NCIMB 13988 / SH1).